Here is a 132-residue protein sequence, read N- to C-terminus: Small ribosomal subunit protein uS8 (132 aa).

It belongs to the universal ribosomal protein uS8 family. In terms of assembly, part of the 30S ribosomal subunit. Contacts proteins S5 and S12.

One of the primary rRNA binding proteins, it binds directly to 16S rRNA central domain where it helps coordinate assembly of the platform of the 30S subunit. This Alkaliphilus metalliredigens (strain QYMF) protein is Small ribosomal subunit protein uS8.